The chain runs to 93 residues: Small ribosomal subunit protein uS19 (93 aa).

The protein belongs to the universal ribosomal protein uS19 family.

Functionally, protein S19 forms a complex with S13 that binds strongly to the 16S ribosomal RNA. This Geotalea daltonii (strain DSM 22248 / JCM 15807 / FRC-32) (Geobacter daltonii) protein is Small ribosomal subunit protein uS19.